We begin with the raw amino-acid sequence, 42 residues long: Omega-theraphotoxin-Asp3a (42 aa).

Cystine bridges form between Cys-1/Cys-16, Cys-8/Cys-21, and Cys-15/Cys-30.

The protein belongs to the neurotoxin 14 (magi-1) family. 08 (Ltx-4) subfamily. Expressed by the venom gland.

It localises to the secreted. In terms of biological role, inhibits voltage-gated calcium channels (Cav) in rat cerebellar granule cells. This chain is Omega-theraphotoxin-Asp3a, found in Aphonopelma sp. (American tarantula).